The primary structure comprises 355 residues: 3-isopropylmalate dehydrogenase (355 aa).

Substrate contacts are provided by Arg-98, Arg-108, Arg-132, and Asp-223. Residues Asp-223, Asp-247, and Asp-251 each contribute to the Mg(2+) site. Residue Gly-283 to Asp-295 participates in NAD(+) binding.

This sequence belongs to the isocitrate and isopropylmalate dehydrogenases family. LeuB type 2 subfamily. As to quaternary structure, homodimer. The cofactor is Mg(2+). Mn(2+) is required as a cofactor.

The protein resides in the cytoplasm. It catalyses the reaction (2R,3S)-3-isopropylmalate + NAD(+) = 4-methyl-2-oxopentanoate + CO2 + NADH. Its pathway is amino-acid biosynthesis; L-leucine biosynthesis; L-leucine from 3-methyl-2-oxobutanoate: step 3/4. In terms of biological role, catalyzes the oxidation of 3-carboxy-2-hydroxy-4-methylpentanoate (3-isopropylmalate) to 3-carboxy-4-methyl-2-oxopentanoate. The product decarboxylates to 4-methyl-2 oxopentanoate. In Clavibacter sepedonicus (Clavibacter michiganensis subsp. sepedonicus), this protein is 3-isopropylmalate dehydrogenase.